The following is a 917-amino-acid chain: Interleukin-6 receptor subunit beta (917 aa).

The signal sequence occupies residues 1 to 22 (MSAPRIWLAQALLFFLTTESIG). Over 23–617 (QLLEPCGYIY…TPKFAQGEIE (595 aa)) the chain is Extracellular. An Ig-like C2-type domain is found at 26 to 120 (EPCGYIYPEF…IEQNVYGVTM (95 aa)). 2 cysteine pairs are disulfide-bonded: C28/C54 and C48/C103. N43, N61, N83, and N131 each carry an N-linked (GlcNAc...) asparagine glycan. Fibronectin type-III domains follow at residues 128 to 221 (KPTN…VKPT), 222 to 322 (PPYN…TYED), 327 to 417 (PPSF…IPSP), 422 to 515 (AYSV…LKQA), and 517 to 611 (PARG…TPKF). An intrachain disulfide couples C134 to C144. The N-linked (GlcNAc...) asparagine glycan is linked to N157. The cysteines at positions 172 and 180 are disulfide-linked. N225 is a glycosylation site (N-linked (GlcNAc...) asparagine). Residues 308–312 (WSDWS) carry the WSXWS motif motif. N388 carries an N-linked (GlcNAc...) asparagine glycan. A disulfide bridge links C456 with C464. N-linked (GlcNAc...) asparagine glycosylation is found at N476 and N551. The chain crosses the membrane as a helical span at residues 618 to 639 (AIVVPVCLAFLLTTLLGVLFCF). The Cytoplasmic segment spans residues 640 to 917 (NKRDLIKKHI…TVRQGGYMPQ (278 aa)). Positions 649–657 (IWPNVPDPS) match the Box 1 motif motif. 2 disordered regions span residues 658–678 (KSHI…NSKD) and 719–754 (TEGH…TAST). A phosphoserine mark is found at S659 and S665. Residues 729–753 (SSCMSSSRPSISSNEENESAQSTAS) show a composition bias toward low complexity. Residues S780, S787, S827, and S837 each carry the phosphoserine modification. The disordered stretch occupies residues 898–917 (EEIPKSYLPQTVRQGGYMPQ).

This sequence belongs to the type I cytokine receptor family. Type 2 subfamily. Component of a hexamer of two molecules each of IL6, IL6R and IL6ST; associates with the complex IL6:IL6R but does not interact with IL6. Forms heterodimers composed of LIFR and IL6ST (type I OSM receptor) which are activated by LIF and OSM. Also forms heterodimers composed of OSMR and IL6ST (type II receptor) which are activated by OSM but not by LIF. Interacts with HCK. Interacts with INPP5D/SHIP1. Interacts with SRC and YES. Interacts with ARMH4; this interaction prevents IL6ST protein homodimerization and bridges ARMH4 with IL6R and STAT3 and therefore inhibits phosphorylation of STAT3 at 'Tyr-705'. Post-translationally, phosphorylation of Ser-780 down-regulates cell surface expression. In terms of processing, heavily N-glycosylated. Glycosylation is required for protein stability and localization in plasma membrane but not for ligand binding. As to expression, expression not restricted to IL6-responsive cells. Found in tissues such as brain, heart, thymus, spleen, kidney, lung and liver. Found in all the cell lines tested except BaF-B03. Expressed paraventricular nucleus of the hypothalamus.

The protein resides in the cell membrane. In terms of biological role, signal-transducing molecule. The receptor systems for IL6, LIF, OSM, CNTF, IL11, CTF1 and BSF3 can utilize IL6ST for initiating signal transmission. Binding of IL6 to IL6R induces IL6ST homodimerization and formation of a high-affinity receptor complex, which activates the intracellular JAK-MAPK and JAK-STAT3 signaling pathways. That causes phosphorylation of IL6ST tyrosine residues which in turn activates STAT3. In parallel, the IL6 signaling pathway induces the expression of two cytokine receptor signaling inhibitors, SOCS1 and SOCS3, which inhibit JAK and terminate the activity of the IL6 signaling pathway as a negative feedback loop. Also activates the yes-associated protein 1 (YAP) and NOTCH pathways to control inflammation-induced epithelial regeneration, independently of STAT3. Mediates signals which regulate immune response, hematopoiesis, pain control and bone metabolism. Has a role in embryonic development. Essential for survival of motor and sensory neurons and for differentiation of astrocytes. Required for expression of TRPA1 in nociceptive neurons. Required for the maintenance of PTH1R expression in the osteoblast lineage and for the stimulation of PTH-induced osteoblast differentiation. Required for normal trabecular bone mass and cortical bone composition. This Mus musculus (Mouse) protein is Interleukin-6 receptor subunit beta.